The primary structure comprises 408 residues: Phosphopentomutase (408 aa).

Mn(2+) is bound by residues aspartate 10, aspartate 307, histidine 312, aspartate 348, histidine 349, and histidine 360.

The protein belongs to the phosphopentomutase family. Requires Mn(2+) as cofactor.

The protein resides in the cytoplasm. It carries out the reaction 2-deoxy-alpha-D-ribose 1-phosphate = 2-deoxy-D-ribose 5-phosphate. The catalysed reaction is alpha-D-ribose 1-phosphate = D-ribose 5-phosphate. Its pathway is carbohydrate degradation; 2-deoxy-D-ribose 1-phosphate degradation; D-glyceraldehyde 3-phosphate and acetaldehyde from 2-deoxy-alpha-D-ribose 1-phosphate: step 1/2. Isomerase that catalyzes the conversion of deoxy-ribose 1-phosphate (dRib-1-P) and ribose 1-phosphate (Rib-1-P) to deoxy-ribose 5-phosphate (dRib-5-P) and ribose 5-phosphate (Rib-5-P), respectively. The chain is Phosphopentomutase from Buchnera aphidicola subsp. Baizongia pistaciae (strain Bp).